The sequence spans 899 residues: Solute carrier family 12 member 9 (899 aa).

At 1–44 the chain is on the cytoplasmic side; that stretch reads MTSESSPLLHYRLFSVSDGGLGPPDSSPIMTDAVTVGTGPTQRK. A helical membrane pass occupies residues 45-65; the sequence is LSTFFGVVVPTVLSMFSIVVF. Topologically, residues 66–80 are extracellular; sequence MRIGFVVGHAGLLQS. A helical transmembrane segment spans residues 81–101; it reads LLMLFVAYVIIWLTVLSVCAI. At 102 to 127 the chain is on the cytoplasmic side; it reads STNGAVQGGGAYFMISRTLGPEFGGS. The helical transmembrane segment at 128-148 threads the bilayer; that stretch reads IGLMFYLANVFACGVYVLGLV. Topologically, residues 149–176 are extracellular; sequence EAVLDVFGRDPSDVTDSLRSLPQGYGYS. The helical transmembrane segment at 177–197 threads the bilayer; sequence FLYASIILLLCMAICLVGASI. The Cytoplasmic segment spans residues 198–202; it reads YSQAS. A helical membrane pass occupies residues 203 to 223; the sequence is FFIFLLVFVVLLTILISFLAV. The Extracellular portion of the chain corresponds to 224–266; sequence RPLTVSIRHGGNVTMTGVYTGINSSTLHNNLQADYSLDYTTGN. Asn-235 and Asn-246 each carry an N-linked (GlcNAc...) asparagine glycan. The chain crosses the membrane as a helical span at residues 267-287; it reads LMNFATVFAVMFNGCTGIMAG. Residues 288–304 are Cytoplasmic-facing; the sequence is CNLSGELKQPSRSIPMG. Residues 305 to 325 traverse the membrane as a helical segment; that stretch reads TIIAVIITFFVYLILFIFTAF. The Extracellular segment spans residues 326-347; sequence TCDRTLLREDYGFFRSINIWPP. The helical transmembrane segment at 348 to 368 threads the bilayer; sequence FVLIGVYATSLSASMSTLIGA. Residues 369–393 lie on the Cytoplasmic side of the membrane; sequence SRILHALAKDDLFGVLLAPAKLVSK. A helical transmembrane segment spans residues 394–414; sequence GGNPWGAVVYTWALVQLVLLA. Over 415 to 419 the chain is Extracellular; that stretch reads GKLNT. A helical membrane pass occupies residues 420-440; the sequence is IAGIVTVFYLIAYAAIDLACL. Residues 441–469 lie on the Cytoplasmic side of the membrane; that stretch reads ALEWASAPNFRPTFRFFSWHTCLLGILSS. Residues 470 to 490 form a helical membrane-spanning segment; sequence LVMMFLINPAYASGSIVLLLL. Residues 491-739 are Extracellular-facing; that stretch reads LLGSIHFRSS…PLDLLRPQAS (249 aa). A helical membrane pass occupies residues 740 to 760; sequence AYVDVCSLFLLQMACILNMAA. Residues 761 to 899 lie on the Cytoplasmic side of the membrane; sequence SWRRYQLRVF…GLTPVTCTEL (139 aa).

This sequence belongs to the SLC12A transporter family.

Its subcellular location is the cell membrane. It localises to the lysosome membrane. Its function is as follows. Seems to correspond to a subunit of a multimeric transport system and thus, additional subunits may be required for its function. May play a role in lysosomal ion flux and osmoregulation. This is Solute carrier family 12 member 9 (slc12a9) from Xenopus laevis (African clawed frog).